We begin with the raw amino-acid sequence, 280 residues long: C-type lectin domain family 1 member A (280 aa).

A disordered region spans residues 1 to 44 (MQAKYSSTRDMLDDDGDTTMSLHSQGSATTRHPEPRRTEHRAPS). Over 1 to 52 (MQAKYSSTRDMLDDDGDTTMSLHSQGSATTRHPEPRRTEHRAPSSTWRPVAL) the chain is Cytoplasmic. Polar residues predominate over residues 18–30 (TTMSLHSQGSATT). The segment covering 31-42 (RHPEPRRTEHRA) has biased composition (basic and acidic residues). A helical; Signal-anchor for type II membrane protein membrane pass occupies residues 53 to 73 (TLLTLCLVLLIGLAALGLLFF). At 74–280 (QYYQLSNTGQ…VPPETLGEGD (207 aa)) the chain is on the extracellular side. N-linked (GlcNAc...) asparagine glycans are attached at residues Asn95 and Asn169. The C-type lectin domain occupies 144–258 (HGDNCYQFYK…CKELKRCVCE (115 aa)). 2 disulfides stabilise this stretch: Cys165–Cys257 and Cys236–Cys249.

Expressed preferentially in dendritic cells.

Its subcellular location is the membrane. This Homo sapiens (Human) protein is C-type lectin domain family 1 member A (CLEC1A).